The primary structure comprises 300 residues: Sporulation protein SPS18 (300 aa).

The region spanning 11–130 is the Arf-GAP domain; sequence ENRKRLLRAK…LANEVRSNDI (120 aa). The segment at 28 to 51 adopts a C4-type zinc-finger fold; it reads CFECKSVNPQFVSCSFGIFICVNC.

The chain is Sporulation protein SPS18 (SPS18) from Saccharomyces cerevisiae (strain ATCC 204508 / S288c) (Baker's yeast).